The primary structure comprises 349 residues: UDP-galactose/UDP-glucose transporter 4 (349 aa).

Transmembrane regions (helical) follow at residues 23–43, 56–76, 115–135, 140–160, 167–187, 205–225, 248–268, and 293–313; these read WQQFLICSSGFFFGYLVNGIC, GWYFTFAQGLVYIALIYMYGF, IMFKSTKVLPVMVMGAFIPGL, PVHEYISAMLLVIGLILFTLA, NFSIIGVMMISGALIMDAFLG, MLFCSTVVGLPFLLAPMILTG, AMATFIGQVSVLSLIALFGAA, and LTEQHGTGLLLIFMGIILKMV. Residues 316–349 form a disordered region; it reads PNPNPKSSGSGQTPGKLERVKFEKEDDEESRPLV. The span at 340-349 shows a compositional bias: acidic residues; that stretch reads EDDEESRPLV.

This sequence belongs to the nucleotide-sugar transporter family. UDP-galactose:UMP antiporter (TC 2.A.7.11) subfamily.

It localises to the membrane. Sugar transporter involved in the transport of nucleotide-sugars from cytoplasm into the Golgi and/or the endoplasmic reticulum. The sequence is that of UDP-galactose/UDP-glucose transporter 4 from Arabidopsis thaliana (Mouse-ear cress).